The sequence spans 203 residues: ATP synthase subunit b (203 aa).

Residues 14-34 (FVWPLLGAGLLLAAEGVAWAS) traverse the membrane as a helical segment.

This sequence belongs to the ATPase B chain family. F-type ATPases have 2 components, F(1) - the catalytic core - and F(0) - the membrane proton channel. F(1) has five subunits: alpha(3), beta(3), gamma(1), delta(1), epsilon(1). F(0) has three main subunits: a(1), b(2) and c(10-14). The alpha and beta chains form an alternating ring which encloses part of the gamma chain. F(1) is attached to F(0) by a central stalk formed by the gamma and epsilon chains, while a peripheral stalk is formed by the delta and b chains.

The protein localises to the cell inner membrane. Its function is as follows. F(1)F(0) ATP synthase produces ATP from ADP in the presence of a proton or sodium gradient. F-type ATPases consist of two structural domains, F(1) containing the extramembraneous catalytic core and F(0) containing the membrane proton channel, linked together by a central stalk and a peripheral stalk. During catalysis, ATP synthesis in the catalytic domain of F(1) is coupled via a rotary mechanism of the central stalk subunits to proton translocation. Component of the F(0) channel, it forms part of the peripheral stalk, linking F(1) to F(0). The sequence is that of ATP synthase subunit b from Syntrophobacter fumaroxidans (strain DSM 10017 / MPOB).